A 346-amino-acid polypeptide reads, in one-letter code: Probable aldo-keto reductase 2 (346 aa).

The Proton donor role is filled by Y63. A substrate-binding site is contributed by H131. 210-220 (SPLGRGFLAAG) contributes to the NADP(+) binding site.

This sequence belongs to the aldo/keto reductase family. Aldo/keto reductase 13 subfamily.

This chain is Probable aldo-keto reductase 2 (AGD2), found in Arabidopsis thaliana (Mouse-ear cress).